We begin with the raw amino-acid sequence, 1026 residues long: Contactin-4 (1026 aa).

The signal sequence occupies residues 1–18 (MRLPWELLVLQSFMLCLA). 6 Ig-like C2-type domains span residues 32–117 (PSHV…AKLQ), 122–206 (ENFK…HQVL), 225–311 (PKIE…GQVT), 316–400 (PNWV…AELS), 406–493 (PDFS…GNVV), and 497–586 (PTKV…DKLS). 6 disulfides stabilise this stretch: Cys50–Cys100, Cys144–Cys194, Cys247–Cys295, Cys337–Cys384, Cys429–Cys477, and Cys519–Cys576. 3 N-linked (GlcNAc...) asparagine glycosylation sites follow: Asn65, Asn90, and Asn191. N-linked (GlcNAc...) asparagine glycosylation is found at Asn370, Asn375, and Asn466. Fibronectin type-III domains are found at residues 599 to 697 (PPEA…TEEA), 702 to 799 (TPAN…SAEE), 804 to 899 (PPAS…TRKP), and 900 to 995 (PPSQ…ISNS). Residues 685–710 (PSRPSEKRRTEEALPEVTPANVSGGG) form a disordered region. Residues 687–696 (RPSEKRRTEE) show a composition bias toward basic and acidic residues. 7 N-linked (GlcNAc...) asparagine glycosylation sites follow: Asn705, Asn764, Asn858, Asn893, Asn911, Asn929, and Asn954. Residue Ser1000 is the site of GPI-anchor amidated serine attachment. A propeptide spans 1001 to 1026 (GASTSNACTLSAISTIMISLTARSSL) (removed in mature form).

Belongs to the immunoglobulin superfamily. Contactin family. In terms of assembly, interacts with PTPRG. Specifically expressed in the nervous system. Not expressed in heart, spleen, lung, liver, kidney or skeletal muscle. In the hippocampus, it is highly expressed in CA1 pyramidal cells and weakly expressed in other regions of the hippocampus.

It localises to the cell membrane. The protein resides in the secreted. Contactins mediate cell surface interactions during nervous system development. Has some neurite outgrowth-promoting activity. May be involved in synaptogenesis. The polypeptide is Contactin-4 (Cntn4) (Rattus norvegicus (Rat)).